The sequence spans 139 residues: Large ribosomal subunit protein bL20 (139 aa).

This sequence belongs to the bacterial ribosomal protein bL20 family.

Functionally, binds directly to 23S ribosomal RNA and is necessary for the in vitro assembly process of the 50S ribosomal subunit. It is not involved in the protein synthesizing functions of that subunit. This Leuconostoc mesenteroides subsp. mesenteroides (strain ATCC 8293 / DSM 20343 / BCRC 11652 / CCM 1803 / JCM 6124 / NCDO 523 / NBRC 100496 / NCIMB 8023 / NCTC 12954 / NRRL B-1118 / 37Y) protein is Large ribosomal subunit protein bL20.